The primary structure comprises 708 residues: tRNA(Met) cytidine acetyltransferase TmcA (708 aa).

ATP-binding positions include Gln-189, 215–224 (GRGKTSALGL), and Arg-357. One can recognise an N-acetyltransferase domain in the interval 398-574 (PECVEQPERL…YSLLMVRGEH (177 aa)). Residues 502-504 (IAV) and 509-515 (QRQGIGS) each bind acetyl-CoA.

Belongs to the RNA cytidine acetyltransferase family. TmcA subfamily.

It is found in the cytoplasm. The enzyme catalyses cytidine(34) in elongator tRNA(Met) + acetyl-CoA + ATP + H2O = N(4)-acetylcytidine(34) in elongator tRNA(Met) + ADP + phosphate + CoA + H(+). Its function is as follows. Catalyzes the formation of N(4)-acetylcytidine (ac(4)C) at the wobble position of tRNA(Met), by using acetyl-CoA as an acetyl donor and ATP (or GTP). This is tRNA(Met) cytidine acetyltransferase TmcA from Vibrio cholerae serotype O1 (strain ATCC 39315 / El Tor Inaba N16961).